Consider the following 517-residue polypeptide: Aldehyde dehydrogenase X, mitochondrial (517 aa).

Residues 1–17 (MLRFLAPRLLSLQGRTA) constitute a mitochondrion transit peptide. Residue Lys-51 is modified to N6-acetyllysine. Lys-52 is subject to N6-acetyllysine; alternate. Lys-52 bears the N6-succinyllysine; alternate mark. Lys-81 is modified (N6-succinyllysine). Residue 262 to 267 (GSTEVG) coordinates NAD(+). Glu-285 functions as the Proton acceptor in the catalytic mechanism. Catalysis depends on Cys-319, which acts as the Nucleophile. N6-acetyllysine; alternate is present on residues Lys-364, Lys-383, Lys-399, Lys-414, and Lys-426. N6-succinyllysine; alternate occurs at positions 364, 383, 399, 414, and 426. Lys-429 bears the N6-acetyllysine mark.

Belongs to the aldehyde dehydrogenase family. Homotetramer. As to expression, liver, testis and to a lesser extent in brain.

It localises to the mitochondrion matrix. The enzyme catalyses an aldehyde + NAD(+) + H2O = a carboxylate + NADH + 2 H(+). The protein operates within alcohol metabolism; ethanol degradation; acetate from ethanol: step 2/2. Its function is as follows. ALDHs play a major role in the detoxification of alcohol-derived acetaldehyde. They are involved in the metabolism of corticosteroids, biogenic amines, neurotransmitters, and lipid peroxidation. The polypeptide is Aldehyde dehydrogenase X, mitochondrial (ALDH1B1) (Homo sapiens (Human)).